Here is a 213-residue protein sequence, read N- to C-terminus: Uridine kinase (213 aa).

ATP is bound at residue 15-22 (GASASGKS).

It belongs to the uridine kinase family.

The protein localises to the cytoplasm. It carries out the reaction uridine + ATP = UMP + ADP + H(+). The enzyme catalyses cytidine + ATP = CMP + ADP + H(+). It functions in the pathway pyrimidine metabolism; CTP biosynthesis via salvage pathway; CTP from cytidine: step 1/3. The protein operates within pyrimidine metabolism; UMP biosynthesis via salvage pathway; UMP from uridine: step 1/1. The sequence is that of Uridine kinase from Salmonella agona (strain SL483).